A 331-amino-acid polypeptide reads, in one-letter code: RNA 3'-terminal phosphate cyclase (331 aa).

ATP contacts are provided by residues glutamine 100 and 276 to 280; that span reads HLADQ. Histidine 301 functions as the Tele-AMP-histidine intermediate in the catalytic mechanism.

The protein belongs to the RNA 3'-terminal cyclase family. Type 1 subfamily.

The protein localises to the cytoplasm. The catalysed reaction is a 3'-end 3'-phospho-ribonucleotide-RNA + ATP = a 3'-end 2',3'-cyclophospho-ribonucleotide-RNA + AMP + diphosphate. Its function is as follows. Catalyzes the conversion of 3'-phosphate to a 2',3'-cyclic phosphodiester at the end of RNA. The mechanism of action of the enzyme occurs in 3 steps: (A) adenylation of the enzyme by ATP; (B) transfer of adenylate to an RNA-N3'P to produce RNA-N3'PP5'A; (C) and attack of the adjacent 2'-hydroxyl on the 3'-phosphorus in the diester linkage to produce the cyclic end product. The biological role of this enzyme is unknown but it is likely to function in some aspects of cellular RNA processing. The sequence is that of RNA 3'-terminal phosphate cyclase from Methanosarcina barkeri (strain Fusaro / DSM 804).